The following is an 89-amino-acid chain: Small ribosomal subunit protein uS17 (89 aa).

Belongs to the universal ribosomal protein uS17 family. Part of the 30S ribosomal subunit.

One of the primary rRNA binding proteins, it binds specifically to the 5'-end of 16S ribosomal RNA. This is Small ribosomal subunit protein uS17 from Polynucleobacter asymbioticus (strain DSM 18221 / CIP 109841 / QLW-P1DMWA-1) (Polynucleobacter necessarius subsp. asymbioticus).